A 434-amino-acid chain; its full sequence is Adenylosuccinate synthetase (434 aa).

Residues 22–28 and 50–52 each bind GTP; these read GDEGKGK and GHT. Asp-23 (proton acceptor) is an active-site residue. Asp-23 and Gly-50 together coordinate Mg(2+). Residues 23-26, 48-51, Thr-139, Arg-153, Gln-234, Thr-249, and Arg-313 contribute to the IMP site; these read DEGK and NAGH. The active-site Proton donor is the His-51. Residue 309 to 315 participates in substrate binding; the sequence is ATTGRKR. GTP-binding positions include Arg-315, 341 to 343, and 423 to 425; these read KLD and SVG.

Belongs to the adenylosuccinate synthetase family. In terms of assembly, homodimer. It depends on Mg(2+) as a cofactor.

The protein localises to the cytoplasm. The enzyme catalyses IMP + L-aspartate + GTP = N(6)-(1,2-dicarboxyethyl)-AMP + GDP + phosphate + 2 H(+). It functions in the pathway purine metabolism; AMP biosynthesis via de novo pathway; AMP from IMP: step 1/2. In terms of biological role, plays an important role in the de novo pathway of purine nucleotide biosynthesis. Catalyzes the first committed step in the biosynthesis of AMP from IMP. The sequence is that of Adenylosuccinate synthetase from Chlorobium phaeobacteroides (strain DSM 266 / SMG 266 / 2430).